The following is a 404-amino-acid chain: Cysteine desulfurase IscS (404 aa).

Residues 75–76 (AT), N155, Q183, and 203–205 (SGH) contribute to the pyridoxal 5'-phosphate site. The residue at position 206 (K206) is an N6-(pyridoxal phosphate)lysine. T243 is a pyridoxal 5'-phosphate binding site. The active-site Cysteine persulfide intermediate is the C328. C328 is a binding site for [2Fe-2S] cluster.

Belongs to the class-V pyridoxal-phosphate-dependent aminotransferase family. NifS/IscS subfamily. As to quaternary structure, homodimer. Forms a heterotetramer with IscU, interacts with other sulfur acceptors. Pyridoxal 5'-phosphate is required as a cofactor.

Its subcellular location is the cytoplasm. The catalysed reaction is (sulfur carrier)-H + L-cysteine = (sulfur carrier)-SH + L-alanine. It participates in cofactor biosynthesis; iron-sulfur cluster biosynthesis. Master enzyme that delivers sulfur to a number of partners involved in Fe-S cluster assembly, tRNA modification or cofactor biosynthesis. Catalyzes the removal of elemental sulfur atoms from cysteine to produce alanine. Functions as a sulfur delivery protein for Fe-S cluster synthesis onto IscU, an Fe-S scaffold assembly protein, as well as other S acceptor proteins. This Pectobacterium carotovorum subsp. carotovorum (strain PC1) protein is Cysteine desulfurase IscS.